The primary structure comprises 190 residues: Selenoprotein S (190 aa).

A helical transmembrane segment spans residues 28 to 48; the sequence is SLLASYGWYILFSCILLYIVI. The segment at 78–90 is VCP/p97-interacting motif (VIM); the sequence is RQEALAAARLRMQ. Residues 115–190 form a disordered region; the sequence is KIEMWDSMQE…RRGPSSGGUN (76 aa). The span at 160 to 174 shows a compositional bias: gly residues; that stretch reads RGGGYNPLTGEGGGT. U189 is a non-standard amino acid (selenocysteine).

It belongs to the selenoprotein S family. As to quaternary structure, interacts with DERL1 and (via VIM motif) with VCP, suggesting that it forms a membrane complex with DERL1 that serves as a receptor for VCP. Also interacts with DERL2, DERL3 and SELENOK. The SELENOK-SELENOS complex interacts with VCP. Interacts with CCDC47. In terms of processing, truncated SELENOS proteins produced by failed UGA/Sec decoding are ubiquitinated by the CRL2(KLHDC2) and CRL2(KLHDC3) complexes, which recognizes the glycine (Gly) at the C-terminus of truncated SELENOS proteins. Truncated SELENOS proteins produced by failed UGA/Sec decoding are also ubiquitinated by the CRL5(KLHDC1) complex.

It localises to the endoplasmic reticulum membrane. The protein resides in the cytoplasm. Functionally, involved in the degradation process of misfolded endoplasmic reticulum (ER) luminal proteins. Participates in the transfer of misfolded proteins from the ER to the cytosol, where they are destroyed by the proteasome in a ubiquitin-dependent manner. Probably acts by serving as a linker between DERL1, which mediates the retrotranslocation of misfolded proteins into the cytosol, and the ATPase complex VCP, which mediates the translocation and ubiquitination. This Mus musculus (Mouse) protein is Selenoprotein S.